A 218-amino-acid chain; its full sequence is MDTTGTGQRGASIVVVDYGLGNLRSVTRGLERASADVSIVGDPGALDDADGIVLPGVGAFGDGMENAGPFRDALTDAADEGRPLFGICLGMQMLLSSSEEADHEGQGDARGLDLIPGRNVRFTGTVKVPHMGWNELAVTRDHPLVGGVDGEYAYFVHSYYAAPDDPGHVVAETDYGERFPAVVANDAGNVFGTQFHPEKSGATGLRILRNFVDYCADQ.

The 207-residue stretch at 12-218 (SIVVVDYGLG…RNFVDYCADQ (207 aa)) folds into the Glutamine amidotransferase type-1 domain. Cysteine 88 serves as the catalytic Nucleophile. Catalysis depends on residues histidine 196 and glutamate 198.

As to quaternary structure, heterodimer of HisH and HisF.

It localises to the cytoplasm. The catalysed reaction is 5-[(5-phospho-1-deoxy-D-ribulos-1-ylimino)methylamino]-1-(5-phospho-beta-D-ribosyl)imidazole-4-carboxamide + L-glutamine = D-erythro-1-(imidazol-4-yl)glycerol 3-phosphate + 5-amino-1-(5-phospho-beta-D-ribosyl)imidazole-4-carboxamide + L-glutamate + H(+). It catalyses the reaction L-glutamine + H2O = L-glutamate + NH4(+). It participates in amino-acid biosynthesis; L-histidine biosynthesis; L-histidine from 5-phospho-alpha-D-ribose 1-diphosphate: step 5/9. In terms of biological role, IGPS catalyzes the conversion of PRFAR and glutamine to IGP, AICAR and glutamate. The HisH subunit catalyzes the hydrolysis of glutamine to glutamate and ammonia as part of the synthesis of IGP and AICAR. The resulting ammonia molecule is channeled to the active site of HisF. The chain is Imidazole glycerol phosphate synthase subunit HisH from Halobacterium salinarum (strain ATCC 700922 / JCM 11081 / NRC-1) (Halobacterium halobium).